The sequence spans 616 residues: Protein NRT1/ PTR FAMILY 2.11 (616 aa).

Residues 1 to 22 (MERKPLELESTDNHQNPSSAVY) form a disordered region. 12 consecutive transmembrane segments (helical) span residues 59-79 (FEKL…TAVF), 87-107 (ATII…AAFL), 118-138 (LSVA…TAAV), 159-179 (GGQI…AGGI), 205-225 (FFNW…TLVV), 233-253 (WTIG…IFFA), 349-369 (VKCI…YLTI), 392-412 (FVIP…VFIV), 435-455 (LQRI…AGFV), 483-503 (AMWL…AAIG), 519-539 (FAGS…SFLI), and 566-586 (LFYF…LVMS).

It belongs to the major facilitator superfamily. Proton-dependent oligopeptide transporter (POT/PTR) (TC 2.A.17) family. Expressed in roots. Detected in shoots, stems and flowers. Expressed in veins and in the root vasculature with highest expression in lateral branching points.

Its subcellular location is the cell membrane. Functionally, high-affinity, proton-dependent glucosinolate-specific transporter. Involved in apoplasmic phloem-loading of glucosinolates and in bidirectional long-distance transport of aliphatic but not indole glucosinolates. May be involved in removal of glucosinolates from the xylem in roots. This is Protein NRT1/ PTR FAMILY 2.11 (NPF2.11) from Arabidopsis thaliana (Mouse-ear cress).